Here is a 151-residue protein sequence, read N- to C-terminus: Sigma factor binding protein 1, chloroplastic (151 aa).

A compositionally biased stretch (low complexity) spans 1-13 (MESSSSTFLTTTS). Disordered regions lie at residues 1–41 (MESS…KPIK) and 66–93 (TGQD…PPAE). The N-terminal 54 residues, 1 to 54 (MESSSSTFLTTTSLDKKKPSPVSRKSPKQKKKTTSTNKPIKVRYISNPMRVQTC), are a transit peptide targeting the chloroplast. The short motif at 16–32 (KKKPSPVSRKSPKQKKK) is the Bipartite nuclear localization signal element. The short motif at 58-67 (FRELVQELTG) is the VQ element.

As to quaternary structure, interacts with the sigma factor SIGA in chloroplast. Interacts with WRKY25 and WRKY33 in the nucleus. In terms of tissue distribution, expressed in leaves and roots, but not in flowers.

It localises to the plastid. The protein resides in the chloroplast. It is found in the nucleus. Contributes to plant defense. May regulate chloroplast metabolism upon infection with pathogens such as Pseudomonas syringae. Functions as activator of WRKY33 in plant defense against necrotrophic pathogens by stimulating the DNA-binding activity of WRKY33. This Arabidopsis thaliana (Mouse-ear cress) protein is Sigma factor binding protein 1, chloroplastic (SIB1).